Reading from the N-terminus, the 384-residue chain is NAD(P) transhydrogenase subunit alpha part 1 (384 aa).

An RQD loop; involved in interaction with PntB region spans residues 126 to 136 (PRISRAQSMDI). NAD(+) contacts are provided by residues 127 to 129 (RIS), 132 to 135 (QSMD), 180 to 182 (VGV), 202 to 204 (DVR), G234, Q247, and L266.

Belongs to the AlaDH/PNT family. As to quaternary structure, heterotrimer of two alpha chains and a beta (PntB) chain; in Rhodospirillum, the alpha chain is made of two subunits (PntAA and PntAB) and forms a dimer.

The enzyme catalyses NAD(+) + NADPH + H(+)(in) = NADH + NADP(+) + H(+)(out). Functionally, the transhydrogenation between NADH and NADP is coupled to respiration and ATP hydrolysis and functions as a proton pump across the membrane. This Rhodospirillum rubrum (strain ATCC 11170 / ATH 1.1.1 / DSM 467 / LMG 4362 / NCIMB 8255 / S1) protein is NAD(P) transhydrogenase subunit alpha part 1 (pntAA).